We begin with the raw amino-acid sequence, 217 residues long: Ribulose-phosphate 3-epimerase (217 aa).

Residue S6 coordinates substrate. Residues H29, D31, and H62 each coordinate a divalent metal cation. D31 (proton acceptor) is an active-site residue. Residues H62, 138–141 (GFGG), 171–173 (DGG), and 193–194 (GS) each bind substrate. D171 contacts a divalent metal cation. D171 serves as the catalytic Proton donor.

Belongs to the ribulose-phosphate 3-epimerase family. The cofactor is a divalent metal cation.

It catalyses the reaction D-ribulose 5-phosphate = D-xylulose 5-phosphate. It participates in carbohydrate degradation. Catalyzes the reversible epimerization of D-ribulose 5-phosphate to D-xylulose 5-phosphate. The protein is Ribulose-phosphate 3-epimerase of Helicobacter pylori (strain ATCC 700392 / 26695) (Campylobacter pylori).